We begin with the raw amino-acid sequence, 191 residues long: Flagellar transcriptional regulator FlhC (191 aa).

Residues Cys-139, Cys-142, Cys-159, and Cys-162 each contribute to the Zn(2+) site.

Belongs to the FlhC family. Heterohexamer composed of two FlhC and four FlhD subunits. Each FlhC binds a FlhD dimer, forming a heterotrimer, and a hexamer assembles by dimerization of two heterotrimers. The cofactor is Zn(2+).

The protein resides in the cytoplasm. Functionally, functions in complex with FlhD as a master transcriptional regulator that regulates transcription of several flagellar and non-flagellar operons by binding to their promoter region. Activates expression of class 2 flagellar genes, including fliA, which is a flagellum-specific sigma factor that turns on the class 3 genes. Also regulates genes whose products function in a variety of physiological pathways. In Enterobacter cloacae subsp. cloacae (strain ATCC 13047 / DSM 30054 / NBRC 13535 / NCTC 10005 / WDCM 00083 / NCDC 279-56), this protein is Flagellar transcriptional regulator FlhC.